Reading from the N-terminus, the 108-residue chain is Urease subunit beta (108 aa).

The protein belongs to the urease beta subunit family. In terms of assembly, heterotrimer of UreA (gamma), UreB (beta) and UreC (alpha) subunits. Three heterotrimers associate to form the active enzyme.

It localises to the cytoplasm. The catalysed reaction is urea + 2 H2O + H(+) = hydrogencarbonate + 2 NH4(+). Its pathway is nitrogen metabolism; urea degradation; CO(2) and NH(3) from urea (urease route): step 1/1. The protein is Urease subunit beta of Proteus hauseri.